We begin with the raw amino-acid sequence, 556 residues long: Arginine--tRNA ligase (556 aa).

Residues 130-140 (ANPTGPIHLGG) carry the 'HIGH' region motif.

The protein belongs to the class-I aminoacyl-tRNA synthetase family. As to quaternary structure, monomer.

The protein resides in the cytoplasm. It catalyses the reaction tRNA(Arg) + L-arginine + ATP = L-arginyl-tRNA(Arg) + AMP + diphosphate. The sequence is that of Arginine--tRNA ligase from Corynebacterium jeikeium (strain K411).